Here is a 98-residue protein sequence, read N- to C-terminus: NADH-ubiquinone oxidoreductase chain 4L (98 aa).

The next 3 membrane-spanning stretches (helical) occupy residues 1–21 (MPLI…GMLV), 29–49 (SLLC…LMTL), and 58–78 (IVPI…LALL).

It belongs to the complex I subunit 4L family. Core subunit of respiratory chain NADH dehydrogenase (Complex I) which is composed of 45 different subunits.

The protein localises to the mitochondrion inner membrane. It carries out the reaction a ubiquinone + NADH + 5 H(+)(in) = a ubiquinol + NAD(+) + 4 H(+)(out). Functionally, core subunit of the mitochondrial membrane respiratory chain NADH dehydrogenase (Complex I) which catalyzes electron transfer from NADH through the respiratory chain, using ubiquinone as an electron acceptor. Part of the enzyme membrane arm which is embedded in the lipid bilayer and involved in proton translocation. This chain is NADH-ubiquinone oxidoreductase chain 4L (MT-ND4L), found in Pan paniscus (Pygmy chimpanzee).